A 1214-amino-acid chain; its full sequence is Myosin-1 (1214 aa).

The tract at residues 1–21 (MAIIKRGARNKTAQEPAKRSA) is disordered. Positions 36-715 (VGVSDLTLLS…TLFALEHMRD (680 aa)) constitute a Myosin motor domain. 129–136 (GESGAGKT) contributes to the ATP binding site. Ser-357 is modified (phosphoserine). The interval 404 to 486 (SIGILDIYGF…PGIFAAMNDS (83 aa)) is actin-binding. 2 IQ domains span residues 719 to 739 (YNMA…RIDS) and 740 to 765 (ATRI…EGSK). One can recognise a TH1 domain in the interval 771 to 961 (KERRTMSLLG…TILVRRGHPA (191 aa)). Disordered regions lie at residues 926–1090 (KPGK…SELP), 1129–1177 (HQGG…AAAQ), and 1193–1214 (NKMR…DDDW). Residues 965–980 (QKKKPKKGKGHSKHHS) are compositionally biased toward basic residues. Composition is skewed to low complexity over residues 981–1000 (TSTS…APVS) and 1037–1057 (AAQP…QKKV). Pro residues predominate over residues 1058-1067 (APPPPPPPPM). One can recognise an SH3 domain in the interval 1069–1131 (SSEPKYEAAY…PTNYVVKHQG (63 aa)). Low complexity predominate over residues 1157-1177 (VSSSQSETATTATPASVAAAQ). Positions 1200–1214 (DGEDNGNDDDDDDDW) are enriched in acidic residues.

This sequence belongs to the TRAFAC class myosin-kinesin ATPase superfamily. Myosin family. Post-translationally, phosphorylation of the TEDS site (Ser-357) is required for the polarization of the actin cytoskeleton. Phosphorylation probably activates the myosin-I ATPase activity.

Its subcellular location is the cytoplasm. It is found in the cytoskeleton. The protein localises to the actin patch. Functionally, type-I myosin implicated in the organization of the actin cytoskeleton. Required for proper actin cytoskeleton polarization. At the cell cortex, assembles in patch-like structures together with proteins from the actin-polymerizing machinery and promotes actin assembly. Functions as actin nucleation-promoting factor (NPF) for the Arp2/3 complex. This is Myosin-1 (MYO1) from Vanderwaltozyma polyspora (strain ATCC 22028 / DSM 70294 / BCRC 21397 / CBS 2163 / NBRC 10782 / NRRL Y-8283 / UCD 57-17) (Kluyveromyces polysporus).